A 33-amino-acid chain; its full sequence is Cytochrome b6-f complex subunit 8 (33 aa).

A helical membrane pass occupies residues 2-22 (LFTFAWASLAAIFTFSIAMVV).

It belongs to the PetN family. As to quaternary structure, the 4 large subunits of the cytochrome b6-f complex are cytochrome b6, subunit IV (17 kDa polypeptide, PetD), cytochrome f and the Rieske protein, while the 4 small subunits are PetG, PetL, PetM and PetN. The complex functions as a dimer.

It localises to the cellular thylakoid membrane. Its function is as follows. Component of the cytochrome b6-f complex, which mediates electron transfer between photosystem II (PSII) and photosystem I (PSI), cyclic electron flow around PSI, and state transitions. This is Cytochrome b6-f complex subunit 8 from Prochlorococcus marinus (strain SARG / CCMP1375 / SS120).